The primary structure comprises 208 residues: MRDPVDYFHNSLVPMVVEQSSRGERAFDIYSRLLRERIIFLTGPVEDQGASLIVAQLLFLEAENPKKEISFYINSPGGVVTSGLSIYDTMQFIRCPVTTLCVGQAASMGSLLLAAGEAGHRFALPNARIMVHQPSGGFQGQATDILIHAREIEALKKRLNEIYVKHTGREYETIHQALERDNFMTADAAKEFGLIDDILHKRPEPAAA.

The active-site Nucleophile is the Ser107. The active site involves His132.

Belongs to the peptidase S14 family. As to quaternary structure, fourteen ClpP subunits assemble into 2 heptameric rings which stack back to back to give a disk-like structure with a central cavity, resembling the structure of eukaryotic proteasomes.

The protein localises to the cytoplasm. It catalyses the reaction Hydrolysis of proteins to small peptides in the presence of ATP and magnesium. alpha-casein is the usual test substrate. In the absence of ATP, only oligopeptides shorter than five residues are hydrolyzed (such as succinyl-Leu-Tyr-|-NHMec, and Leu-Tyr-Leu-|-Tyr-Trp, in which cleavage of the -Tyr-|-Leu- and -Tyr-|-Trp bonds also occurs).. Functionally, cleaves peptides in various proteins in a process that requires ATP hydrolysis. Has a chymotrypsin-like activity. Plays a major role in the degradation of misfolded proteins. The polypeptide is ATP-dependent Clp protease proteolytic subunit (Methylorubrum extorquens (strain CM4 / NCIMB 13688) (Methylobacterium extorquens)).